Reading from the N-terminus, the 176-residue chain is ATP-dependent protease subunit HslV (176 aa).

The active site involves Thr5. Residues Ser161, Cys164, and Thr167 each coordinate Na(+).

It belongs to the peptidase T1B family. HslV subfamily. In terms of assembly, a double ring-shaped homohexamer of HslV is capped on each side by a ring-shaped HslU homohexamer. The assembly of the HslU/HslV complex is dependent on binding of ATP.

The protein resides in the cytoplasm. It catalyses the reaction ATP-dependent cleavage of peptide bonds with broad specificity.. With respect to regulation, allosterically activated by HslU binding. Functionally, protease subunit of a proteasome-like degradation complex believed to be a general protein degrading machinery. The chain is ATP-dependent protease subunit HslV from Thermoanaerobacter sp. (strain X514).